Consider the following 264-residue polypeptide: uncharacterized protein (264 aa).

The a divalent metal cation site is built by H7, H9, E102, H138, H163, and D213.

Belongs to the metallo-dependent hydrolases superfamily. TatD-type hydrolase family. A divalent metal cation serves as cofactor.

This is an uncharacterized protein from Buchnera aphidicola subsp. Acyrthosiphon pisum (strain APS) (Acyrthosiphon pisum symbiotic bacterium).